A 60-amino-acid polypeptide reads, in one-letter code: Three-finger toxin MS3 (60 aa).

Intrachain disulfides connect Cys3–Cys22, Cys15–Cys39, Cys41–Cys52, and Cys53–Cys58.

Belongs to the three-finger toxin family. Short-chain subfamily. Type I alpha-neurotoxin sub-subfamily. As to expression, expressed by the venom gland.

It is found in the secreted. Functionally, produces peripheral paralysis by blocking neuromuscular transmission at the postsynaptic site. Binds to and inhibits the endogenous nicotinic acetylcholine receptors (nAChR) in human rhabdomyosarcoma TE 671 cell line with an IC(50) of 346 mM. This neurotoxin is lethal to mice by intraperitoneal injection and to zebrafish by injection at the back of the dorsolateral region. The polypeptide is Three-finger toxin MS3 (Micrurus surinamensis (Surinam coral snake)).